A 358-amino-acid polypeptide reads, in one-letter code: Leukotriene B4 receptor 2 (358 aa).

Over 1–24 the chain is Extracellular; that stretch reads MSVCYRPPGNETLLSWKGSRATGT. The N-linked (GlcNAc...) asparagine glycan is linked to asparagine 10. The helical transmembrane segment at 25–45 threads the bilayer; sequence AFLLLAALLGLPGNGFVVWSL. Topologically, residues 46-60 are cytoplasmic; sequence AGWRPTAGRPLAATL. Residues 61-81 form a helical membrane-spanning segment; that stretch reads VLHLALADGAVLLLTPLFVAF. The Extracellular segment spans residues 82 to 96; it reads LSRQAWPLGQVGCKA. Residues 97–117 traverse the membrane as a helical segment; that stretch reads VYYVCALSMYASVLLTGLLSL. The Cytoplasmic portion of the chain corresponds to 118-140; the sequence is QRCLAVTRPFLAPRLRSPALARR. The chain crosses the membrane as a helical span at residues 141–161; that stretch reads LLLGVWLAALVLAVPAAVYRH. Over 162 to 185 the chain is Extracellular; sequence LWGDRVCQLCHPSAVHAAAHLSLE. The chain crosses the membrane as a helical span at residues 186 to 206; that stretch reads TLTAFVLPFGTVLGCYGVTLA. At 207–225 the chain is on the cytoplasmic side; that stretch reads RLRGARWGSGRQGTRVGRL. Residues 226–246 traverse the membrane as a helical segment; sequence VSAIVLAFGLLWAPYHAVNLL. Over 247-275 the chain is Extracellular; it reads QAVAALAPPEGPLARLGGAGQAARAGTTA. A helical membrane pass occupies residues 276 to 296; sequence LAFFSSSVNPVLYVFTAGDLL. Residues 297–358 lie on the Cytoplasmic side of the membrane; sequence PRAGPRFLTR…GRMEKDSQEW (62 aa). The tract at residues 315–358 is disordered; that stretch reads RVGSRSREGTMELRTTPRLKVVGQGRGYGDPGGGGRMEKDSQEW. Residues 338 to 349 show a composition bias toward gly residues; that stretch reads QGRGYGDPGGGG.

It belongs to the G-protein coupled receptor 1 family.

It localises to the cell membrane. Functionally, low-affinity receptor for leukotrienes including leukotriene B4. Mediates chemotaxis of granulocytes and macrophages. The response is mediated via G-proteins that activate a phosphatidylinositol-calcium second messenger system. The sequence is that of Leukotriene B4 receptor 2 (Ltb4r2) from Rattus norvegicus (Rat).